We begin with the raw amino-acid sequence, 390 residues long: Chorismate synthase 2 (390 aa).

NADP(+) is bound by residues Arg39 and Arg45. Residues 132–134 (RSS), 253–254 (NA), Gly298, 313–317 (KPIPT), and Arg339 each bind FMN.

It belongs to the chorismate synthase family. As to quaternary structure, homotetramer. FMNH2 is required as a cofactor.

The enzyme catalyses 5-O-(1-carboxyvinyl)-3-phosphoshikimate = chorismate + phosphate. It participates in metabolic intermediate biosynthesis; chorismate biosynthesis; chorismate from D-erythrose 4-phosphate and phosphoenolpyruvate: step 7/7. Catalyzes the anti-1,4-elimination of the C-3 phosphate and the C-6 proR hydrogen from 5-enolpyruvylshikimate-3-phosphate (EPSP) to yield chorismate, which is the branch point compound that serves as the starting substrate for the three terminal pathways of aromatic amino acid biosynthesis. This reaction introduces a second double bond into the aromatic ring system. This chain is Chorismate synthase 2, found in Bacillus cereus (strain ATCC 10987 / NRS 248).